We begin with the raw amino-acid sequence, 247 residues long: Small ribosomal subunit protein uS3 (247 aa).

The 70-residue stretch at 18-87 folds into the KH type-2 domain; the sequence is IDEYLAKRFY…NPQITVRRVE (70 aa). The interval 226–247 is disordered; the sequence is QQGEVVGEAPNTPLEEQGQKQG.

Belongs to the universal ribosomal protein uS3 family. As to quaternary structure, part of the 30S ribosomal subunit.

In terms of biological role, binds the lower part of the 30S subunit head. The protein is Small ribosomal subunit protein uS3 of Hyperthermus butylicus (strain DSM 5456 / JCM 9403 / PLM1-5).